Consider the following 270-residue polypeptide: Basigin (270 aa).

A signal peptide spans 1–21 (MAAVLFALLALALLRAGGASA). The 82-residue stretch at 22–103 (AAGTVTTSVQ…TGEATLTVDG (82 aa)) folds into the Ig-like C2-type domain. The Extracellular portion of the chain corresponds to 22-207 (AAGTVTTSVQ…VTLRVRSRLA (186 aa)). Intrachain disulfides connect cysteine 41-cysteine 87 and cysteine 126-cysteine 185. 4 N-linked (GlcNAc...) asparagine glycosylation sites follow: asparagine 44, asparagine 75, asparagine 152, and asparagine 186. Residues 105 to 203 (PRIKAVKKSE…DAAVVTLRVR (99 aa)) form the Ig-like V-type domain. Residues 208–228 (ALWPFLGIVAEVLVLVTVIFI) form a helical membrane-spanning segment. The Cytoplasmic segment spans residues 229 to 270 (YEKRRKPDEVLDDEDAGAAPLKSSGHHVNDDKGKNVRQRNAS). The segment at 239–270 (LDDEDAGAAPLKSSGHHVNDDKGKNVRQRNAS) is disordered. Serine 252 bears the Phosphoserine mark.

As to quaternary structure, homooligomer. Interacts with VEGFA, KDR/VEGFR2, PPIA/CYPA, SLC1A3, SLC16A12, SLC16A11, ATP1B2, MAG, L1CAM and AJAP1. Interacts with PPIL2; regulates BSG transport to the cell membrane. Interacts with XKR8; promoting its localization at the cell membrane. Interacts with SLC16A3; interaction mediates SLC16A3 targeting to the plasma membrane. Interacts with SLC16A1; interaction mediates SLC16A1 targeting to the plasma membrane. Interacts with SLC16A6; this interaction mediates targeting to the plasma membrane.

The protein resides in the cell membrane. It localises to the endoplasmic reticulum membrane. It is found in the basolateral cell membrane. Signaling receptor for cyclophilins, essential for PPIA/CYPA and PPIB/CYPB-dependent signaling related to chemotaxis and adhesion of immune cells. Plays an important role in targeting the monocarboxylate transporters SLC16A1/GLUT1, SLC16A3, SLC16A8, SLC16A11 and SLC16A12 to the plasma membrane. Acts as a coreceptor for vascular endothelial growth factor receptor 2 (KDR/VEGFR2) in endothelial cells enhancing its VEGFA-mediated activation and downstream signaling. Promotes angiogenesis through EPAS1/HIF2A-mediated up-regulation of VEGFA and KDR/VEGFR2 in endothelial cells. The sequence is that of Basigin (BSG) from Oryctolagus cuniculus (Rabbit).